The following is an 87-amino-acid chain: Small ribosomal subunit protein bS20 (87 aa).

The disordered stretch occupies residues 1–25; the sequence is MANTAQARKRARQSVQRNKHNSSLR. Over residues 7 to 22 the composition is skewed to basic residues; it reads ARKRARQSVQRNKHNS.

This sequence belongs to the bacterial ribosomal protein bS20 family.

In terms of biological role, binds directly to 16S ribosomal RNA. In Bordetella bronchiseptica (strain ATCC BAA-588 / NCTC 13252 / RB50) (Alcaligenes bronchisepticus), this protein is Small ribosomal subunit protein bS20.